A 608-amino-acid polypeptide reads, in one-letter code: Elongation factor 4 (608 aa).

Positions 11–193 (SKIRNFSIIA…QIVEKVPAPD (183 aa)) constitute a tr-type G domain. GTP is bound by residues 23-28 (DHGKST) and 140-143 (NKID).

Belongs to the TRAFAC class translation factor GTPase superfamily. Classic translation factor GTPase family. LepA subfamily.

The protein resides in the cell membrane. It catalyses the reaction GTP + H2O = GDP + phosphate + H(+). Its function is as follows. Required for accurate and efficient protein synthesis under certain stress conditions. May act as a fidelity factor of the translation reaction, by catalyzing a one-codon backward translocation of tRNAs on improperly translocated ribosomes. Back-translocation proceeds from a post-translocation (POST) complex to a pre-translocation (PRE) complex, thus giving elongation factor G a second chance to translocate the tRNAs correctly. Binds to ribosomes in a GTP-dependent manner. In Bacillus cytotoxicus (strain DSM 22905 / CIP 110041 / 391-98 / NVH 391-98), this protein is Elongation factor 4.